Here is a 79-residue protein sequence, read N- to C-terminus: uncharacterized protein (79 aa).

This is an uncharacterized protein from Bacillus subtilis (strain 168).